A 360-amino-acid polypeptide reads, in one-letter code: 3-dehydroquinate synthase (360 aa).

NAD(+)-binding positions include 70-75, 104-108, 128-129, Lys-141, and Lys-150; these read DGEKYK, GVIGD, and TT. 3 residues coordinate Zn(2+): Glu-183, His-246, and His-263.

It belongs to the sugar phosphate cyclases superfamily. Dehydroquinate synthase family. Co(2+) is required as a cofactor. Requires Zn(2+) as cofactor. It depends on NAD(+) as a cofactor.

It localises to the cytoplasm. It catalyses the reaction 7-phospho-2-dehydro-3-deoxy-D-arabino-heptonate = 3-dehydroquinate + phosphate. It participates in metabolic intermediate biosynthesis; chorismate biosynthesis; chorismate from D-erythrose 4-phosphate and phosphoenolpyruvate: step 2/7. Catalyzes the conversion of 3-deoxy-D-arabino-heptulosonate 7-phosphate (DAHP) to dehydroquinate (DHQ). This Acinetobacter baumannii (strain AYE) protein is 3-dehydroquinate synthase.